A 174-amino-acid polypeptide reads, in one-letter code: NADH-quinone oxidoreductase subunit B 2 (174 aa).

4 residues coordinate [4Fe-4S] cluster: Cys38, Cys39, Cys104, and Cys133.

The protein belongs to the complex I 20 kDa subunit family. NDH-1 is composed of 14 different subunits. Subunits NuoB, C, D, E, F, and G constitute the peripheral sector of the complex. It depends on [4Fe-4S] cluster as a cofactor.

It is found in the cell membrane. It carries out the reaction a quinone + NADH + 5 H(+)(in) = a quinol + NAD(+) + 4 H(+)(out). Functionally, NDH-1 shuttles electrons from NADH, via FMN and iron-sulfur (Fe-S) centers, to quinones in the respiratory chain. The immediate electron acceptor for the enzyme in this species is believed to be ubiquinone. Couples the redox reaction to proton translocation (for every two electrons transferred, four hydrogen ions are translocated across the cytoplasmic membrane), and thus conserves the redox energy in a proton gradient. The protein is NADH-quinone oxidoreductase subunit B 2 of Chloroflexus aurantiacus (strain ATCC 29366 / DSM 635 / J-10-fl).